The chain runs to 294 residues: Sulfotransferase 1E1 (294 aa).

47–52 (KSGTTW) is a binding site for 3'-phosphoadenylyl sulfate. Substrate is bound at residue 105–107 (KTH). Histidine 107 (proton acceptor) is an active-site residue. 3'-phosphoadenylyl sulfate-binding positions include arginine 129, serine 137, tyrosine 192, 226–231 (TSFQEM), and 256–258 (RKG).

It belongs to the sulfotransferase 1 family. As to quaternary structure, homodimer. As to expression, liver, intestine and at lower level in the kidney.

It is found in the cytoplasm. Its subcellular location is the cytosol. The enzyme catalyses estrone + 3'-phosphoadenylyl sulfate = estrone 3-sulfate + adenosine 3',5'-bisphosphate + H(+). It catalyses the reaction (24S)-hydroxycholesterol + 3'-phosphoadenylyl sulfate = (24S)-hydroxycholesterol 3-sulfate + adenosine 3',5'-bisphosphate + H(+). It carries out the reaction 17beta-estradiol + 3'-phosphoadenylyl sulfate = 17beta-estradiol 3-sulfate + adenosine 3',5'-bisphosphate + H(+). The catalysed reaction is 3beta-hydroxyandrost-5-en-17-one + 3'-phosphoadenylyl sulfate = dehydroepiandrosterone 3-sulfate + adenosine 3',5'-bisphosphate + H(+). The enzyme catalyses 4-ethylphenol + 3'-phosphoadenylyl sulfate = 4-ethylphenyl sulfate + adenosine 3',5'-bisphosphate + H(+). With respect to regulation, inhibited by estradiol. Sulfotransferase that utilizes 3'-phospho-5'-adenylyl sulfate (PAPS) as sulfonate donor to catalyze the sulfate conjugation of estradiol and estrone. Is a key enzyme in estrogen homeostasis, the sulfation of estrogens leads to their inactivation. Also sulfates dehydroepiandrosterone (DHEA), pregnenolone, (24S)-hydroxycholesterol and xenobiotic compounds like ethinylestradiol, equalenin, diethyl stilbesterol and 1-naphthol at significantly lower efficiency. Does not sulfonate cortisol, testosterone and dopamine. May play a role in gut microbiota-host metabolic interaction. O-sulfonates 4-ethylphenol (4-EP), a dietary tyrosine-derived metabolite produced by gut bacteria. The product 4-EPS crosses the blood-brain barrier and may negatively regulate oligodendrocyte maturation and myelination, affecting the functional connectivity of different brain regions associated with the limbic system. The sequence is that of Sulfotransferase 1E1 (SULT1E1) from Homo sapiens (Human).